Here is a 249-residue protein sequence, read N- to C-terminus: 1-(5-phosphoribosyl)-5-[(5-phosphoribosylamino)methylideneamino] imidazole-4-carboxamide isomerase (249 aa).

The active-site Proton acceptor is Asp-8. Asp-130 serves as the catalytic Proton donor.

The protein belongs to the HisA/HisF family.

It localises to the cytoplasm. The enzyme catalyses 1-(5-phospho-beta-D-ribosyl)-5-[(5-phospho-beta-D-ribosylamino)methylideneamino]imidazole-4-carboxamide = 5-[(5-phospho-1-deoxy-D-ribulos-1-ylimino)methylamino]-1-(5-phospho-beta-D-ribosyl)imidazole-4-carboxamide. The protein operates within amino-acid biosynthesis; L-histidine biosynthesis; L-histidine from 5-phospho-alpha-D-ribose 1-diphosphate: step 4/9. The polypeptide is 1-(5-phosphoribosyl)-5-[(5-phosphoribosylamino)methylideneamino] imidazole-4-carboxamide isomerase (Nitrosococcus oceani (strain ATCC 19707 / BCRC 17464 / JCM 30415 / NCIMB 11848 / C-107)).